Reading from the N-terminus, the 471-residue chain is Ribulose bisphosphate carboxylase large chain (471 aa).

Lys-5 is subject to N6,N6,N6-trimethyllysine. Residues Asn-114 and Thr-164 each coordinate substrate. Lys-166 serves as the catalytic Proton acceptor. Lys-168 is a substrate binding site. Mg(2+) contacts are provided by Lys-192, Asp-194, and Glu-195. Lys-192 is subject to N6-carboxylysine. His-285 acts as the Proton acceptor in catalysis. Residues Arg-286, His-318, and Ser-370 each contribute to the substrate site.

The protein belongs to the RuBisCO large chain family. Type I subfamily. As to quaternary structure, heterohexadecamer of 8 large chains and 8 small chains; disulfide-linked. The disulfide link is formed within the large subunit homodimers. Mg(2+) is required as a cofactor. In terms of processing, the disulfide bond which can form in the large chain dimeric partners within the hexadecamer appears to be associated with oxidative stress and protein turnover.

It is found in the plastid. The protein localises to the chloroplast. The catalysed reaction is 2 (2R)-3-phosphoglycerate + 2 H(+) = D-ribulose 1,5-bisphosphate + CO2 + H2O. The enzyme catalyses D-ribulose 1,5-bisphosphate + O2 = 2-phosphoglycolate + (2R)-3-phosphoglycerate + 2 H(+). In terms of biological role, ruBisCO catalyzes two reactions: the carboxylation of D-ribulose 1,5-bisphosphate, the primary event in carbon dioxide fixation, as well as the oxidative fragmentation of the pentose substrate in the photorespiration process. Both reactions occur simultaneously and in competition at the same active site. In Strychnos nux-vomica (Poison nut), this protein is Ribulose bisphosphate carboxylase large chain.